The chain runs to 1821 residues: PH-interacting protein (1821 aa).

The residue at position 136 (Ser-136) is a Phosphoserine. WD repeat units lie at residues 181-222 (GHLS…ATLR), 224-262 (HAAE…PLAV), 265-310 (GHSA…INPR), 319-360 (RPGV…KISE), and 363-402 (FHTD…WKSI). Lys-421 is covalently cross-linked (Glycyl lysine isopeptide (Lys-Gly) (interchain with G-Cter in SUMO2)). WD repeat units lie at residues 422–461 (ITKM…LIHV), 464–504 (GHED…KVRS), and 512–551 (QGHG…KYDK). Phosphoserine occurs at positions 641, 659, 674, 677, 683, and 692. Disordered regions lie at residues 653–695 (EQDL…SGQI) and 782–927 (DLGD…RLAV). Residues 665–681 (SNASRVNRGSVSSTSEV) show a composition bias toward polar residues. The span at 800 to 810 (SALEETPRPLE) shows a compositional bias: basic and acidic residues. Residues 841–854 (SDGSSSDYSSDYSD) show a composition bias toward low complexity. 4 positions are modified to phosphoserine: Ser-879, Ser-880, Ser-881, and Ser-911. The span at 912–924 (PKKKKPKERKQKR) shows a compositional bias: basic residues. The tract at residues 924-1129 (RLAVGELTEN…MELIPNNAVF (206 aa)) is mediates interaction with IRS1. Positions 1156-1263 (WGANPRDEEC…DLLLHFIKDQ (108 aa)) constitute a Bromo 1 domain. A phosphoserine mark is found at Ser-1281, Ser-1283, and Ser-1296. Residues 1282–1310 (DSEEEEKDADVPGTSTRKRKDHQPRRRLR) are disordered. Basic residues predominate over residues 1297 to 1310 (TRKRKDHQPRRRLR). Residue Ser-1315 is modified to Phosphoserine. The 106-residue stretch at 1316–1421 (YDIQAWKKQC…AFFEEHISSV (106 aa)) folds into the Bromo 2 domain. Thr-1359 carries the post-translational modification Phosphothreonine. Ser-1405 carries the phosphoserine modification. Over residues 1435-1446 (NTISKKRKKRNR) the composition is skewed to basic residues. The interval 1435 to 1507 (NTISKKRKKR…PESSSVVRTR (73 aa)) is disordered. Over residues 1447-1457 (SSSLSSSAASS) the composition is skewed to low complexity. Lys-1470 is covalently cross-linked (Glycyl lysine isopeptide (Lys-Gly) (interchain with G-Cter in SUMO1); alternate). Residue Lys-1470 forms a Glycyl lysine isopeptide (Lys-Gly) (interchain with G-Cter in SUMO2); alternate linkage. Over residues 1471–1482 (SEVSTSPFSIPT) the composition is skewed to polar residues. Ser-1479 is modified (phosphoserine). Lys-1497 carries the post-translational modification N6-acetyllysine. Ser-1525 carries the post-translational modification Phosphoserine. Lys-1533 is modified (N6-acetyllysine). The span at 1556-1576 (STLSSPDPLTFSHATKNNSAK) shows a compositional bias: polar residues. 3 disordered regions span residues 1556-1596 (STLS…VFSK), 1623-1676 (QVNG…NSEQ), and 1740-1785 (RSNR…DSEE). A Phosphoserine modification is found at Ser-1560. A Glycyl lysine isopeptide (Lys-Gly) (interchain with G-Cter in SUMO2) cross-link involves residue Lys-1644. Phosphoserine is present on Ser-1651. Lys-1670 is covalently cross-linked (Glycyl lysine isopeptide (Lys-Gly) (interchain with G-Cter in SUMO2)). Ser-1762 and Ser-1783 each carry phosphoserine.

In terms of assembly, interacts (via bromo domain) with acetylated lysine residues on histone H1.4, histone H3 and H4 (in vitro). Interacts with IRS1 and IRS2. As to expression, widely expressed with most abundant expression detected in pancreatic islets, brain and skeletal muscle. Predominantly expressed in developing and regenerating neurons. Expressed in adult brain (granular layer of the olfactorium bulb, hippocampus, dentate gyrus and cerebellum internal granular layer). Expressed in the CA3 region of adult hippocampus, adult and fetal retina, perinatal dorsal root ganglion and embryonal olfactory epithelia (at protein level).

Its subcellular location is the nucleus. Functionally, probable regulator of the insulin and insulin-like growth factor signaling pathways. Stimulates cell proliferation through regulation of cyclin transcription and has an anti-apoptotic activity through AKT1 phosphorylation and activation. Plays a role in the regulation of cell morphology and cytoskeletal organization. The polypeptide is PH-interacting protein (Phip) (Mus musculus (Mouse)).